Reading from the N-terminus, the 660-residue chain is Bifunctional polymyxin resistance protein ArnA (660 aa).

Residues 1 to 304 form a formyltransferase ArnAFT region; that stretch reads MKTVVFAYHD…TLGLVQGSRL (304 aa). Residue 86–88 participates in (6R)-10-formyltetrahydrofolate binding; that stretch reads HLI. Catalysis depends on His-104, which acts as the Proton donor; for formyltransferase activity. Residues Arg-114 and 136–140 each bind (6R)-10-formyltetrahydrofolate; that span reads VKRAD. The interval 314–660 is dehydrogenase ArnADH; sequence RRTRVLILGV…RTVDLTDKPS (347 aa). Residues Asp-347 and 368 to 369 each bind NAD(+); that span reads DI. UDP-alpha-D-glucuronate contacts are provided by residues Ala-393, Tyr-398, and 432-433; that span reads TS. Glu-434 (proton acceptor; for decarboxylase activity) is an active-site residue. UDP-alpha-D-glucuronate is bound by residues Arg-460, Asn-492, 526 to 535, and Tyr-613; that span reads KLIDGGKQKR. The Proton donor; for decarboxylase activity role is filled by Arg-619.

The protein in the N-terminal section; belongs to the Fmt family. UDP-L-Ara4N formyltransferase subfamily. It in the C-terminal section; belongs to the NAD(P)-dependent epimerase/dehydratase family. UDP-glucuronic acid decarboxylase subfamily. Homohexamer, formed by a dimer of trimers.

It catalyses the reaction UDP-alpha-D-glucuronate + NAD(+) = UDP-beta-L-threo-pentopyranos-4-ulose + CO2 + NADH. It carries out the reaction UDP-4-amino-4-deoxy-beta-L-arabinose + (6R)-10-formyltetrahydrofolate = UDP-4-deoxy-4-formamido-beta-L-arabinose + (6S)-5,6,7,8-tetrahydrofolate + H(+). It functions in the pathway nucleotide-sugar biosynthesis; UDP-4-deoxy-4-formamido-beta-L-arabinose biosynthesis; UDP-4-deoxy-4-formamido-beta-L-arabinose from UDP-alpha-D-glucuronate: step 1/3. Its pathway is nucleotide-sugar biosynthesis; UDP-4-deoxy-4-formamido-beta-L-arabinose biosynthesis; UDP-4-deoxy-4-formamido-beta-L-arabinose from UDP-alpha-D-glucuronate: step 3/3. It participates in bacterial outer membrane biogenesis; lipopolysaccharide biosynthesis. Bifunctional enzyme that catalyzes the oxidative decarboxylation of UDP-glucuronic acid (UDP-GlcUA) to UDP-4-keto-arabinose (UDP-Ara4O) and the addition of a formyl group to UDP-4-amino-4-deoxy-L-arabinose (UDP-L-Ara4N) to form UDP-L-4-formamido-arabinose (UDP-L-Ara4FN). The modified arabinose is attached to lipid A and is required for resistance to polymyxin and cationic antimicrobial peptides. The sequence is that of Bifunctional polymyxin resistance protein ArnA from Escherichia coli (strain SMS-3-5 / SECEC).